A 643-amino-acid chain; its full sequence is tRNA 5-methylaminomethyl-2-thiouridine biosynthesis bifunctional protein MnmC (643 aa).

Residues 1 to 223 are tRNA (mnm(5)s(2)U34)-methyltransferase; it reads MPDRLVSATL…VDDRLVGDYA (223 aa). Residues 247 to 643 form an FAD-dependent cmnm(5)s(2)U34 oxidoreductase region; it reads IGAGLAGCAV…LRARRVGSAG (397 aa).

It in the N-terminal section; belongs to the methyltransferase superfamily. tRNA (mnm(5)s(2)U34)-methyltransferase family. The protein in the C-terminal section; belongs to the DAO family. FAD is required as a cofactor.

Its subcellular location is the cytoplasm. The catalysed reaction is 5-aminomethyl-2-thiouridine(34) in tRNA + S-adenosyl-L-methionine = 5-methylaminomethyl-2-thiouridine(34) in tRNA + S-adenosyl-L-homocysteine + H(+). Its function is as follows. Catalyzes the last two steps in the biosynthesis of 5-methylaminomethyl-2-thiouridine (mnm(5)s(2)U) at the wobble position (U34) in tRNA. Catalyzes the FAD-dependent demodification of cmnm(5)s(2)U34 to nm(5)s(2)U34, followed by the transfer of a methyl group from S-adenosyl-L-methionine to nm(5)s(2)U34, to form mnm(5)s(2)U34. In Burkholderia orbicola (strain MC0-3), this protein is tRNA 5-methylaminomethyl-2-thiouridine biosynthesis bifunctional protein MnmC.